The chain runs to 230 residues: MGKVRGLRARVHQAAVRPKGEAAPGPAPPAPEATPPPASAAGKDWAFINTNIFARTKIDPSALVQKLELDVRSVTSVRRGEAGSSARSVPSIRRGAEAKTVLPKKEKMKLRREQWLQKIEAIKLAEQKHREERRRRATVVVGDLHPLRDALPELLGLEAGSRRQARSRESNKPRPSELSRMSAAQRQQLLEEERTRFQELLASPAYRASPLVAIGQTLARQMQLEDGGQL.

The segment covering Met-1 to Val-11 has biased composition (basic residues). Disordered regions lie at residues Met-1 to Gly-42 and Leu-155 to Gln-187. The span at Gly-25–Ala-38 shows a compositional bias: pro residues. A Phosphothreonine modification is found at Thr-34. The span at Arg-166–Glu-177 shows a compositional bias: basic and acidic residues. Position 203 is a phosphoserine (Ser-203).

It belongs to the SLX9 family. As to expression, not detected in any tested tissue.

Its subcellular location is the nucleus. The protein localises to the nucleolus. In terms of biological role, may be involved in ribosome biogenesis. This chain is Ribosome biogenesis protein SLX9 homolog, found in Homo sapiens (Human).